A 150-amino-acid polypeptide reads, in one-letter code: FAD synthase (150 aa).

Residues 11–12, 16–19, Asp96, and Tyr124 each bind ATP; these read TF and HPGH.

It belongs to the archaeal FAD synthase family. Homodimer. It depends on a divalent metal cation as a cofactor.

The enzyme catalyses FMN + ATP + H(+) = FAD + diphosphate. Its pathway is cofactor biosynthesis; FAD biosynthesis; FAD from FMN: step 1/1. In terms of biological role, catalyzes the transfer of the AMP portion of ATP to flavin mononucleotide (FMN) to produce flavin adenine dinucleotide (FAD) coenzyme. In Methanococcus maripaludis (strain DSM 14266 / JCM 13030 / NBRC 101832 / S2 / LL), this protein is FAD synthase.